The primary structure comprises 185 residues: MQVSVECQKRPENINPRALRRQGLIPAVLYGHNGTESISLVVGEKAALTLLKKASVNNTLVDVNVPEMPWTGKALIQEVQSHPWKRNLYHLSFFSVSAHGKLDIVVPIKAIGEAIGTKQGGLIEQFVNEVNVSCIADNIPEVIEFDVSEIGVGQSLLVGDLKMPEGVTLKDDPHTTVFAIVAAKR.

It belongs to the bacterial ribosomal protein bL25 family. CTC subfamily. Part of the 50S ribosomal subunit; part of the 5S rRNA/L5/L18/L25 subcomplex. Contacts the 5S rRNA. Binds to the 5S rRNA independently of L5 and L18.

Functionally, this is one of the proteins that binds to the 5S RNA in the ribosome where it forms part of the central protuberance. In Microcystis aeruginosa (strain NIES-843 / IAM M-2473), this protein is Large ribosomal subunit protein bL25.